A 397-amino-acid chain; its full sequence is Lymphoid enhancer-binding factor 1 (397 aa).

The CTNNB1-binding stretch occupies residues 1 to 60 (MPQLSGGGGGGDPELCATDEMIPFKDEGDPQKEKIFAEISHPEEEGDLADIKSSLVNESE). Lys-25 participates in a covalent cross-link: Glycyl lysine isopeptide (Lys-Gly) (interchain with G-Cter in SUMO). The segment at 38–102 (EISHPEEEGD…KHPDGGLYNK (65 aa)) is disordered. Residues 80-96 (PYHDKAREHPDDGKHPD) are compositionally biased toward basic and acidic residues. Ser-130 bears the Phosphoserine mark. Thr-153 carries the phosphothreonine; by NLK modification. A Phosphoserine; by NLK modification is found at Ser-164. 2 disordered regions span residues 164–190 (SPGS…PAPE) and 266–296 (VKQE…KRPH). A Glycyl lysine isopeptide (Lys-Gly) (interchain with G-Cter in SUMO) cross-link involves residue Lys-267. Basic and acidic residues predominate over residues 267 to 294 (KQEHPHTDSDLMHVKPEHEQRKEQEPKR). Positions 297–365 (IKKPLNAFML…LHMQLYPGWS (69 aa)) form a DNA-binding region, HMG box. The segment at 367–397 (RDNYGKKKKRKREKLQESTSGTGPRMTAAYI) is disordered.

The protein belongs to the TCF/LEF family. As to quaternary structure, binds the armadillo repeat of CTNNB1 and forms a stable complex. Interacts with TLE1, PIASG, ALYREF/THOC4, EP300, MDFI and MDFIC. Interacts with DAZAP2. Post-translationally, phosphorylated at Thr-153 and/or Ser-164 by NLK. Phosphorylation by NLK at these sites represses LEF1-mediated transcriptional activation of target genes of the canonical Wnt signaling pathway.

Its subcellular location is the nucleus. Its function is as follows. Transcription factor that binds DNA in a sequence-specific manner. Participates in the Wnt signaling pathway. Activates transcription of target genes in the presence of CTNNB1 and EP300. PIASG antagonizes both Wnt-dependent and Wnt-independent activation by LEF1. TLE1, TLE2, TLE3 and TLE4 repress transactivation mediated by LEF1 and CTNNB1. Regulates T-cell receptor alpha enhancer function. Required for IL17A expressing gamma-delta T-cell maturation and development, via binding to regulator loci of BLK to modulate expression. Acts as a positive regulator of odontoblast differentiation during mesenchymal tooth germ formation, expression is repressed during the bell stage by MSX1-mediated inhibition of CTNNB1 signaling. May play a role in hair cell differentiation and follicle morphogenesis. In Rattus norvegicus (Rat), this protein is Lymphoid enhancer-binding factor 1.